The following is an 860-amino-acid chain: Leucine--tRNA ligase (860 aa).

The short motif at 42–52 (PYPSGRLHMGH) is the 'HIGH' region element. Residues 619-623 (KMSKS) carry the 'KMSKS' region motif. Lysine 622 serves as a coordination point for ATP.

This sequence belongs to the class-I aminoacyl-tRNA synthetase family.

The protein resides in the cytoplasm. The enzyme catalyses tRNA(Leu) + L-leucine + ATP = L-leucyl-tRNA(Leu) + AMP + diphosphate. This is Leucine--tRNA ligase from Salmonella enteritidis PT4 (strain P125109).